A 305-amino-acid chain; its full sequence is N-acetylneuraminate lyase A (305 aa).

Aceneuramate contacts are provided by Thr51 and Thr52. Catalysis depends on Tyr143, which acts as the Proton donor. Lys173 serves as the catalytic Schiff-base intermediate with substrate. Aceneuramate contacts are provided by Ser175, Gly197, Asp199, Glu200, and Ser216.

It belongs to the DapA family. NanA subfamily. As to quaternary structure, homotetramer.

The protein resides in the cytoplasm. It catalyses the reaction aceneuramate = aldehydo-N-acetyl-D-mannosamine + pyruvate. It participates in amino-sugar metabolism; N-acetylneuraminate degradation. In terms of biological role, catalyzes the cleavage of N-acetylneuraminic acid (sialic acid) to form pyruvate and N-acetylmannosamine via a Schiff base intermediate. It prevents sialic acids from being recycled and returning to the cell surface. Involved in the N-glycolylneuraminic acid (Neu5Gc) degradation pathway. This chain is N-acetylneuraminate lyase A (npl-a), found in Xenopus laevis (African clawed frog).